We begin with the raw amino-acid sequence, 241 residues long: MNPQLSPKAIREIREGTCNPLGAPQVTTDLSENIILTSLDDLHNWARLSSLWPLLYGTACCFIEFAALIGSRFDFDRFGLVPRSSPRQADLLIVAGTVTMKMAPALVRLYEQMPEPKYVIAMGACTITGGMFSADSTTAVRGVDKLIPVDLYLPGCPPRPEAIFDAVIKLRKKVGNESILERKKTEQTHRYITSDHEMNLVFSENTGEYLNKTSAKVISSSQKEKITELPEKTEITNTEKD.

Positions 60, 61, 125, and 156 each coordinate [4Fe-4S] cluster. The segment at 220–241 (SSQKEKITELPEKTEITNTEKD) is disordered. The span at 222-241 (QKEKITELPEKTEITNTEKD) shows a compositional bias: basic and acidic residues.

The protein belongs to the complex I 20 kDa subunit family. In terms of assembly, NDH-1 can be composed of about 15 different subunits; different subcomplexes with different compositions have been identified which probably have different functions. [4Fe-4S] cluster is required as a cofactor.

Its subcellular location is the cellular thylakoid membrane. The enzyme catalyses a plastoquinone + NADH + (n+1) H(+)(in) = a plastoquinol + NAD(+) + n H(+)(out). The catalysed reaction is a plastoquinone + NADPH + (n+1) H(+)(in) = a plastoquinol + NADP(+) + n H(+)(out). Functionally, NDH-1 shuttles electrons from an unknown electron donor, via FMN and iron-sulfur (Fe-S) centers, to quinones in the respiratory and/or the photosynthetic chain. The immediate electron acceptor for the enzyme in this species is believed to be plastoquinone. Couples the redox reaction to proton translocation, and thus conserves the redox energy in a proton gradient. Cyanobacterial NDH-1 also plays a role in inorganic carbon-concentration. In Prochlorococcus marinus (strain MIT 9215), this protein is NAD(P)H-quinone oxidoreductase subunit K.